We begin with the raw amino-acid sequence, 569 residues long: MRKGRHMPRHTNANYARPGVSPNHPMFGRYLSTVGFPPAQNVYNHWRHWYQPGHLWWTQPPQLQHPSSSFSTVRHPFNRPPRPPDPYQWSSWRQTGVLPHTRGLHLSAGLMESTDRPPPQKRRKSAEGEISQRSPQHSPPKGSRSPKGSPEWLRNVSSIEVANRTSAVPELKRHWEDLSHLCKAAPSVNRGKQKWPFDFSVMSYNILSQDLLCDNTYLYRHCNPPVLDWRNRFPNIIKELEQYSADIMCLQEVQEDHYKQQIKPSLESLGYHCEFKRRTGLKPDGCAVIFKRERFSLVSCHPVEYFRRGVPLMDRDNVGLIVLLRPIDPHVSLSNICVANTHLLYNPRRGDIKLAQLAMLLAEISRVSQLPDSSVCPVLLCGDFNSVPWSPLYRFIKDRRLDYDGMPIGKVSGQEETPRGQRILTVPIWPRSLGISQQCQYENQTRDSELRDLEQTERESFTEASIEHCLRLTSAYSHHLKESGQPEITTCHSRTAITVDYIFYSAALGDVMAQAEYSAPPERGLQLLGRLALVGEKELQKVNGLPNQHNSSDHLPLLTRFRLHPQADS.

Disordered stretches follow at residues 1 to 22 (MRKGRHMPRHTNANYARPGVSP), 63 to 92 (LQHPSSSFSTVRHPFNRPPRPPDPYQWSSW), and 109 to 155 (GLME…WLRN). Positions 63-72 (LQHPSSSFST) are enriched in polar residues. Low complexity predominate over residues 139-150 (PPKGSRSPKGSP).

The protein belongs to the CCR4/nocturin family.

This Danio rerio (Zebrafish) protein is Protein angel homolog 2 (angel2).